We begin with the raw amino-acid sequence, 205 residues long: Holliday junction branch migration complex subunit RuvA (205 aa).

The tract at residues 1–64 is domain I; that stretch reads MIGKLKGVID…EDMIRLYGFA (64 aa). Residues 65–143 form a domain II region; it reads NQLEREWFRL…AFAGDASGTI (79 aa). Positions 144-152 are flexible linker; it reads GLKQELGAG. The domain III stretch occupies residues 153–205; that stretch reads AAPAPVADAVSALSNLGYSRDQAANAVAAALKEAGENADSAKLIRLGLKELSR.

The protein belongs to the RuvA family. In terms of assembly, homotetramer. Forms an RuvA(8)-RuvB(12)-Holliday junction (HJ) complex. HJ DNA is sandwiched between 2 RuvA tetramers; dsDNA enters through RuvA and exits via RuvB. An RuvB hexamer assembles on each DNA strand where it exits the tetramer. Each RuvB hexamer is contacted by two RuvA subunits (via domain III) on 2 adjacent RuvB subunits; this complex drives branch migration. In the full resolvosome a probable DNA-RuvA(4)-RuvB(12)-RuvC(2) complex forms which resolves the HJ.

It localises to the cytoplasm. In terms of biological role, the RuvA-RuvB-RuvC complex processes Holliday junction (HJ) DNA during genetic recombination and DNA repair, while the RuvA-RuvB complex plays an important role in the rescue of blocked DNA replication forks via replication fork reversal (RFR). RuvA specifically binds to HJ cruciform DNA, conferring on it an open structure. The RuvB hexamer acts as an ATP-dependent pump, pulling dsDNA into and through the RuvAB complex. HJ branch migration allows RuvC to scan DNA until it finds its consensus sequence, where it cleaves and resolves the cruciform DNA. The protein is Holliday junction branch migration complex subunit RuvA of Brucella anthropi (strain ATCC 49188 / DSM 6882 / CCUG 24695 / JCM 21032 / LMG 3331 / NBRC 15819 / NCTC 12168 / Alc 37) (Ochrobactrum anthropi).